The primary structure comprises 172 residues: Shikimate kinase (172 aa).

14–19 (GAGKST) contacts ATP. Serine 18 provides a ligand contact to Mg(2+). Residues aspartate 36, arginine 60, and glycine 82 each coordinate substrate. An ATP-binding site is contributed by arginine 120. Residue arginine 140 coordinates substrate. Residue glutamine 157 participates in ATP binding.

Belongs to the shikimate kinase family. As to quaternary structure, monomer. Requires Mg(2+) as cofactor.

It is found in the cytoplasm. It catalyses the reaction shikimate + ATP = 3-phosphoshikimate + ADP + H(+). It participates in metabolic intermediate biosynthesis; chorismate biosynthesis; chorismate from D-erythrose 4-phosphate and phosphoenolpyruvate: step 5/7. Its function is as follows. Catalyzes the specific phosphorylation of the 3-hydroxyl group of shikimic acid using ATP as a cosubstrate. This chain is Shikimate kinase, found in Aeromonas salmonicida (strain A449).